We begin with the raw amino-acid sequence, 594 residues long: Cytoplasmic polyadenylation element-binding protein 2 (594 aa).

Positions 72-90 (KEREKVDEEKEGVERREEN) are enriched in basic and acidic residues. 2 disordered regions span residues 72 to 91 (KERE…EENG) and 367 to 388 (GGGF…STSE). Residues 367–378 (GGGFNSGSGSGN) show a composition bias toward gly residues. Residues 458-540 (LVAFIGGVPR…KRVEIKPYFF (83 aa)) form the RRM domain.

In terms of biological role, cytoplasmic polyadenylation element binding protein that binds to and regulates the translation of specific mRNAs. The protein is Cytoplasmic polyadenylation element-binding protein 2 (cpb-2) of Caenorhabditis japonica.